The primary structure comprises 119 residues: V-type proton ATPase subunit F (119 aa).

Belongs to the V-ATPase F subunit family. As to quaternary structure, V-ATPase is a heteromultimeric enzyme composed of a peripheral catalytic V1 complex (components A to H) attached to an integral membrane V0 proton pore complex (components: a, c, c', c'', d, e, f and VOA1).

It localises to the vacuole membrane. Its function is as follows. Subunit of the V1 complex of vacuolar(H+)-ATPase (V-ATPase), a multisubunit enzyme composed of a peripheral complex (V1) that hydrolyzes ATP and a membrane integral complex (V0) that translocates protons. V-ATPase is responsible for acidifying and maintaining the pH of intracellular compartments. The sequence is that of V-type proton ATPase subunit F (VMA7) from Vanderwaltozyma polyspora (strain ATCC 22028 / DSM 70294 / BCRC 21397 / CBS 2163 / NBRC 10782 / NRRL Y-8283 / UCD 57-17) (Kluyveromyces polysporus).